A 346-amino-acid chain; its full sequence is Methionine import ATP-binding protein MetN 1 (346 aa).

The region spanning 2–241 (IEFKQVTKTF…PQHPTTEKFV (240 aa)) is the ABC transporter domain. 38–45 (GFSGAGKS) is an ATP binding site.

It belongs to the ABC transporter superfamily. Methionine importer (TC 3.A.1.24) family. In terms of assembly, the complex is composed of two ATP-binding proteins (MetN), two transmembrane proteins (MetI) and a solute-binding protein (MetQ).

The protein resides in the cell membrane. It carries out the reaction L-methionine(out) + ATP + H2O = L-methionine(in) + ADP + phosphate + H(+). The enzyme catalyses D-methionine(out) + ATP + H2O = D-methionine(in) + ADP + phosphate + H(+). In terms of biological role, part of the ABC transporter complex MetNIQ involved in methionine import. Responsible for energy coupling to the transport system. The protein is Methionine import ATP-binding protein MetN 1 of Shouchella clausii (strain KSM-K16) (Alkalihalobacillus clausii).